The chain runs to 124 residues: MATVNQLVRKPRVRKVAKSNVPALEACPQKRGVCTRVYTTTPKKPNSALRKVCRVRLTNGFEVTSYIGGEGHNLQEHSVILIRGGRVKDLPGVRYHTVRGALDCSGVKDRKQARSKYGVKKPKA.

Position 89 is a 3-methylthioaspartic acid (Asp89).

Belongs to the universal ribosomal protein uS12 family. Part of the 30S ribosomal subunit. Contacts proteins S8 and S17. May interact with IF1 in the 30S initiation complex.

In terms of biological role, with S4 and S5 plays an important role in translational accuracy. Functionally, interacts with and stabilizes bases of the 16S rRNA that are involved in tRNA selection in the A site and with the mRNA backbone. Located at the interface of the 30S and 50S subunits, it traverses the body of the 30S subunit contacting proteins on the other side and probably holding the rRNA structure together. The combined cluster of proteins S8, S12 and S17 appears to hold together the shoulder and platform of the 30S subunit. The chain is Small ribosomal subunit protein uS12 from Erwinia tasmaniensis (strain DSM 17950 / CFBP 7177 / CIP 109463 / NCPPB 4357 / Et1/99).